Here is a 586-residue protein sequence, read N- to C-terminus: RNA-directed RNA polymerase subunit beta (586 aa).

One can recognise a RdRp catalytic domain in the interval 259–391 (VRAYSGSCSN…TNEKKTFFDG (133 aa)). Aspartate 274, aspartate 359, and aspartate 360 together coordinate Mg(2+).

Homodimer; the replicase complex can dimerize. Part of the viral RNA-dependent RNA polymerase complex, the other subunits are the host ribosomal protein S1, EF-Tu and EF-Ts. S1 is needed for the initiation of genomic RNA (+)-strand replication. Requires Mg(2+) as cofactor.

The enzyme catalyses RNA(n) + a ribonucleoside 5'-triphosphate = RNA(n+1) + diphosphate. Functionally, this is the catalytic subunit of the viral RNA-dependent RNA polymerase complex. This complex is involved in viral RNA replication that produces (+)-stranded genomes via a complementary, (-)-stranded intermediate. Binds RNA cooperatively with the host ribosomal protein S1. This is RNA-directed RNA polymerase subunit beta from Escherichia coli.